A 550-amino-acid chain; its full sequence is Membrane protein insertase YidC (550 aa).

The next 6 helical transmembrane spans lie at 6–26 (LVLFLVFSLSLVMLWNAWLKQ), 333–353 (VVDYGWLTVIAAPLFWVLSWI), 356–376 (VVGNWGWAIIIVTILIKLMFF), 430–450 (LPILVQIPVFISLYWVLLGSV), 469–489 (PYFILPVIMGVSMLIQMKLNP), and 504–524 (PVIFTFMFLWFPSGLVLYWVV).

This sequence belongs to the OXA1/ALB3/YidC family. Type 1 subfamily. As to quaternary structure, interacts with the Sec translocase complex via SecD. Specifically interacts with transmembrane segments of nascent integral membrane proteins during membrane integration.

Its subcellular location is the cell inner membrane. Required for the insertion and/or proper folding and/or complex formation of integral membrane proteins into the membrane. Involved in integration of membrane proteins that insert both dependently and independently of the Sec translocase complex, as well as at least some lipoproteins. Aids folding of multispanning membrane proteins. The protein is Membrane protein insertase YidC of Aromatoleum aromaticum (strain DSM 19018 / LMG 30748 / EbN1) (Azoarcus sp. (strain EbN1)).